A 428-amino-acid chain; its full sequence is Putative heme-binding peroxidase (428 aa).

A disordered region spans residues 1-33 (MTAIQKPVVAKREAPKAEVNPTVSRSTQTETIK). The segment covering 21-32 (PTVSRSTQTETI) has biased composition (polar residues). Catalysis depends on H188, which acts as the Proton acceptor. H312 is a binding site for heme b. W328 acts as the Tryptophan radical intermediate in catalysis.

This sequence belongs to the peroxidase family. Cytochrome c peroxidase subfamily. It depends on heme b as a cofactor.

Destroys radicals which are normally produced within the cells and which are toxic to biological systems. The polypeptide is Putative heme-binding peroxidase (Debaryomyces hansenii (strain ATCC 36239 / CBS 767 / BCRC 21394 / JCM 1990 / NBRC 0083 / IGC 2968) (Yeast)).